The sequence spans 75 residues: Acyl carrier protein (75 aa).

Residues 1 to 75 (MSVFDKVKSI…DAVNYIKENQ (75 aa)) form the Carrier domain. Position 35 is an O-(pantetheine 4'-phosphoryl)serine (Ser35).

This sequence belongs to the acyl carrier protein (ACP) family. 4'-phosphopantetheine is transferred from CoA to a specific serine of apo-ACP by AcpS. This modification is essential for activity because fatty acids are bound in thioester linkage to the sulfhydryl of the prosthetic group.

Its subcellular location is the cytoplasm. It functions in the pathway lipid metabolism; fatty acid biosynthesis. Its function is as follows. Carrier of the growing fatty acid chain in fatty acid biosynthesis. This chain is Acyl carrier protein, found in Desulfitobacterium hafniense (strain Y51).